Consider the following 312-residue polypeptide: Putative endonuclease 4 (312 aa).

Positions 84, 127, 166, 202, 205, 239, 252, 254, and 284 each coordinate Zn(2+).

Belongs to the AP endonuclease 2 family. Zn(2+) is required as a cofactor.

The enzyme catalyses Endonucleolytic cleavage to 5'-phosphooligonucleotide end-products.. Its function is as follows. Endonuclease IV plays a role in DNA repair. It cleaves phosphodiester bonds at apurinic or apyrimidinic sites (AP sites) to produce new 5'-ends that are base-free deoxyribose 5-phosphate residues. The chain is Putative endonuclease 4 from Acanthamoeba polyphaga (Amoeba).